The chain runs to 588 residues: L-fucose isomerase (588 aa).

Active-site proton acceptor residues include E335 and D359. E335, D359, and H525 together coordinate Mn(2+).

This sequence belongs to the L-fucose isomerase family. It depends on Mn(2+) as a cofactor.

The protein resides in the cytoplasm. The catalysed reaction is L-fucose = L-fuculose. Its pathway is carbohydrate degradation; L-fucose degradation; L-lactaldehyde and glycerone phosphate from L-fucose: step 1/3. Its function is as follows. Converts the aldose L-fucose into the corresponding ketose L-fuculose. This is L-fucose isomerase from Streptococcus pneumoniae (strain Taiwan19F-14).